The following is a 494-amino-acid chain: Uric acid degradation bifunctional protein PucL (494 aa).

The interval 1–174 (MFTMDDLNQM…EKGETQMKRT (174 aa)) is OHCU decarboxylase. Residue histidine 68 is the Proton donor; for OHCU decarboxylase activity of the active site. 5-hydroxy-2-oxo-4-ureido-2,5-dihydro-1H-imidazole-5-carboxylate contacts are provided by residues proline 69, 81–85 (SVREQ), and 116–120 (FILAV). Residues 175-494 (MSYGKGNVFA…AAEKCRSLKA (320 aa)) form a urate oxidase region. Lysine 179 (charge relay system; for urate oxidase activity) is an active-site residue. Lysine 190 serves as the catalytic Charge relay system. The Charge relay system; for urate oxidase activity role is filled by threonine 239. Residues threonine 239, aspartate 240, phenylalanine 349, arginine 366, isoleucine 414, glutamine 415, and asparagine 441 each coordinate urate.

In the N-terminal section; belongs to the OHCU decarboxylase family. It in the C-terminal section; belongs to the uricase family.

The catalysed reaction is 5-hydroxy-2-oxo-4-ureido-2,5-dihydro-1H-imidazole-5-carboxylate + H(+) = (S)-allantoin + CO2. It catalyses the reaction urate + O2 + H2O = 5-hydroxyisourate + H2O2. It functions in the pathway purine metabolism; urate degradation; (S)-allantoin from urate: step 1/3. Its pathway is purine metabolism; urate degradation; (S)-allantoin from urate: step 3/3. Catalyzes two steps in the degradation of uric acid, i.e. the oxidation of uric acid to 5-hydroxyisourate (HIU) and the stereoselective decarboxylation of 2-oxo-4-hydroxy-4-carboxy-5-ureidoimidazoline (OHCU) to (S)-allantoin. The polypeptide is Uric acid degradation bifunctional protein PucL (pucL) (Bacillus subtilis (strain 168)).